The primary structure comprises 119 residues: Hemerythrin subunit B (119 aa).

Fe cation is bound by residues His-26, His-55, Glu-59, His-74, His-78, His-107, and Asp-112.

This sequence belongs to the hemerythrin family.

Its function is as follows. Hemerythrin is a respiratory protein in blood cells of certain marine worms. The oxygen-binding site in each chain contains two iron atoms. The polypeptide is Hemerythrin subunit B (Sipunculus nudus (Sipunculan worm)).